Reading from the N-terminus, the 120-residue chain is UPF0231 protein YacL (120 aa).

This sequence belongs to the UPF0231 family.

The polypeptide is UPF0231 protein YacL (Salmonella paratyphi A (strain ATCC 9150 / SARB42)).